Here is a 376-residue protein sequence, read N- to C-terminus: PCM7-4 (376 aa).

Functionally, has antibacterial activity against Listeria monocytogenes. The sequence is that of PCM7-4 from Bacillus velezensis.